A 232-amino-acid chain; its full sequence is Lipopolysaccharide core heptose(II) kinase WaaY (232 aa).

Belongs to the protein kinase superfamily. RfaY/WaaY family.

It catalyses the reaction alpha-D-Glc-(1-&gt;3)-[L-alpha-D-Hep-(1-&gt;7)]-L-alpha-D-Hep-(1-&gt;3)-4-O-PO3(2-)-L-alpha-D-Hep-(1-&gt;5)-[alpha-Kdo-(2-&gt;4)]-alpha-Kdo-(2-&gt;6)-lipid A + ATP = alpha-D-Glc-(1-&gt;3)-[L-alpha-D-Hep-(1-&gt;7)]-4-O-PO3(2-)-L-alpha-D-Hep-(1-&gt;3)-4-O-PO3(2-)-L-alpha-D-Hep-(1-&gt;5)-[alpha-Kdo-(2-&gt;4)]-alpha-Kdo-(2-&gt;6)-lipid A + ADP + H(+). It participates in bacterial outer membrane biogenesis; LPS core biosynthesis. In terms of biological role, kinase involved in the biosynthesis of the core oligosaccharide region of lipopolysaccharide (LPS). Catalyzes the phosphorylation of the second heptose unit (HepII) of the inner core. The chain is Lipopolysaccharide core heptose(II) kinase WaaY from Escherichia coli (strain K12).